A 252-amino-acid polypeptide reads, in one-letter code: 3-dehydroquinate dehydratase (252 aa).

3-dehydroquinate-binding positions include 46 to 48 (EWR) and arginine 82. The Proton donor/acceptor role is filled by histidine 143. Lysine 170 functions as the Schiff-base intermediate with substrate in the catalytic mechanism. Residues arginine 212, serine 231, and glutamine 235 each coordinate 3-dehydroquinate.

Belongs to the type-I 3-dehydroquinase family. Homodimer.

The enzyme catalyses 3-dehydroquinate = 3-dehydroshikimate + H2O. It functions in the pathway metabolic intermediate biosynthesis; chorismate biosynthesis; chorismate from D-erythrose 4-phosphate and phosphoenolpyruvate: step 3/7. Functionally, involved in the third step of the chorismate pathway, which leads to the biosynthesis of aromatic amino acids. Catalyzes the cis-dehydration of 3-dehydroquinate (DHQ) and introduces the first double bond of the aromatic ring to yield 3-dehydroshikimate. The polypeptide is 3-dehydroquinate dehydratase (Listeria monocytogenes serovar 1/2a (strain ATCC BAA-679 / EGD-e)).